Consider the following 366-residue polypeptide: Prostaglandin F2-alpha receptor (366 aa).

Residues 1–31 (MSINSSKQPASSAAGLIANTTCQTENRLSVF) are Extracellular-facing. Residues Asn4 and Asn19 are each glycosylated (N-linked (GlcNAc...) asparagine). A helical transmembrane segment spans residues 32 to 55 (FSIIFMTVGIVSNSLAIAILMKAY). The Cytoplasmic portion of the chain corresponds to 56–69 (QRFRRKSKASFLLL). A helical transmembrane segment spans residues 70 to 90 (ASGLVITDFFGHLINGGIAVF). Topologically, residues 91 to 109 (VYASDKDWIRFDQSNILCS) are extracellular. Cysteines 108 and 186 form a disulfide. Residues 110-131 (VFGISMVFSGLCPLFLGSTMAI) traverse the membrane as a helical segment. Residues 132–152 (ERCIGVTNPLFHSTKITSKHV) are Cytoplasmic-facing. A helical membrane pass occupies residues 153–175 (KMILSGVCMFAVFVALLPILGHR). At 176 to 198 (DYQIQASRTWCFYNTEHIEDWED) the chain is on the extracellular side. Residues 199-224 (RFYLLFFSSLGLLALGISFSCNAVTG) traverse the membrane as a helical segment. Over 225–250 (VTLLRVKFRSQQHRQGRSHHLEMVIQ) the chain is Cytoplasmic. A helical transmembrane segment spans residues 251-267 (LLAIMCVSCVCWSPFLV). The Extracellular portion of the chain corresponds to 268–285 (TMANIAINGNNSPVTCET). The helical transmembrane segment at 286–307 (TLFALRMATWNQILDPWVYILL) threads the bilayer. Over 308-366 (RKAVLRNLYKLASRCCGVNIISLHIWELSSIKNSLKVAAISESPAAEKENQQASSEAGL) the chain is Cytoplasmic.

This sequence belongs to the G-protein coupled receptor 1 family. Highest expression in pregnant ovary. Also found in a low extent in the kidney. In the brain, expressed in astrocytes and oligodendrocytes, and meningeal fibroblasts, but not in migroglia cells.

Its subcellular location is the cell membrane. Functionally, receptor for prostaglandin F2-alpha (PGF2-alpha). The activity of this receptor is mediated by G proteins which activate a phosphatidylinositol-calcium second messenger system. Initiates luteolysis in the corpus luteum. In Rattus norvegicus (Rat), this protein is Prostaglandin F2-alpha receptor (Ptgfr).